The primary structure comprises 527 residues: Glutamyl-tRNA reductase 1, chloroplastic (527 aa).

Residues 1–43 (MAGATSATAAAGAFAAAKARGPAAACPWLVAAGGRRRSGVVRC) constitute a chloroplast transit peptide. Residues 124 to 127 (TCNR), Ser184, 189 to 191 (EGQ), and Gln195 each bind substrate. The active-site Nucleophile is Cys125. 266 to 271 (GAGKMG) contributes to the NADP(+) binding site.

Belongs to the glutamyl-tRNA reductase family. As to quaternary structure, homodimer.

The protein localises to the plastid. It is found in the chloroplast. The enzyme catalyses (S)-4-amino-5-oxopentanoate + tRNA(Glu) + NADP(+) = L-glutamyl-tRNA(Glu) + NADPH + H(+). The protein operates within porphyrin-containing compound metabolism; protoporphyrin-IX biosynthesis; 5-aminolevulinate from L-glutamyl-tRNA(Glu): step 1/2. Catalyzes the NADPH-dependent reduction of glutamyl-tRNA(Glu) to glutamate 1-semialdehyde (GSA). This chain is Glutamyl-tRNA reductase 1, chloroplastic (HEMA1), found in Hordeum vulgare (Barley).